A 340-amino-acid polypeptide reads, in one-letter code: Holliday junction branch migration complex subunit RuvB (340 aa).

The interval 1–181 is large ATPase domain (RuvB-L); it reads MDRIVEIEKA…FGMQFRLNFY (181 aa). Residues Leu-20, Arg-21, Gly-62, Lys-65, Thr-66, Thr-67, 128–130, Arg-171, Tyr-181, and Arg-218 each bind ATP; that span reads EDF. A Mg(2+)-binding site is contributed by Thr-66. Positions 182–252 are small ATPAse domain (RuvB-S); sequence TSDELAKIVQ…RAKSSLDALG (71 aa). The head domain (RuvB-H) stretch occupies residues 255–340; the sequence is DLGFDEMDLK…TQKGLFDEDQ (86 aa). The DNA site is built by Arg-309 and Arg-314.

It belongs to the RuvB family. Homohexamer. Forms an RuvA(8)-RuvB(12)-Holliday junction (HJ) complex. HJ DNA is sandwiched between 2 RuvA tetramers; dsDNA enters through RuvA and exits via RuvB. An RuvB hexamer assembles on each DNA strand where it exits the tetramer. Each RuvB hexamer is contacted by two RuvA subunits (via domain III) on 2 adjacent RuvB subunits; this complex drives branch migration. In the full resolvosome a probable DNA-RuvA(4)-RuvB(12)-RuvC(2) complex forms which resolves the HJ.

Its subcellular location is the cytoplasm. The catalysed reaction is ATP + H2O = ADP + phosphate + H(+). Functionally, the RuvA-RuvB-RuvC complex processes Holliday junction (HJ) DNA during genetic recombination and DNA repair, while the RuvA-RuvB complex plays an important role in the rescue of blocked DNA replication forks via replication fork reversal (RFR). RuvA specifically binds to HJ cruciform DNA, conferring on it an open structure. The RuvB hexamer acts as an ATP-dependent pump, pulling dsDNA into and through the RuvAB complex. RuvB forms 2 homohexamers on either side of HJ DNA bound by 1 or 2 RuvA tetramers; 4 subunits per hexamer contact DNA at a time. Coordinated motions by a converter formed by DNA-disengaged RuvB subunits stimulates ATP hydrolysis and nucleotide exchange. Immobilization of the converter enables RuvB to convert the ATP-contained energy into a lever motion, pulling 2 nucleotides of DNA out of the RuvA tetramer per ATP hydrolyzed, thus driving DNA branch migration. The RuvB motors rotate together with the DNA substrate, which together with the progressing nucleotide cycle form the mechanistic basis for DNA recombination by continuous HJ branch migration. Branch migration allows RuvC to scan DNA until it finds its consensus sequence, where it cleaves and resolves cruciform DNA. The chain is Holliday junction branch migration complex subunit RuvB from Campylobacter hominis (strain ATCC BAA-381 / DSM 21671 / CCUG 45161 / LMG 19568 / NCTC 13146 / CH001A).